Here is a 107-residue protein sequence, read N- to C-terminus: DNA polymerase delta subunit 4 (107 aa).

Positions 1-16 match the PCNA-interaction protein motif (PIP box) motif; it reads MGRKRLITDSYPVVKR. Residues 1–35 form a disordered region; the sequence is MGRKRLITDSYPVVKRREGSAGHSKGELAPDLGEE. Positions 15–28 are enriched in basic and acidic residues; sequence KRREGSAGHSKGEL.

The protein belongs to the DNA polymerase delta subunit 4 family. In terms of assembly, component of the tetrameric DNA polymerase delta complex (Pol-delta4), which consists of POLD1/p125, POLD2/p50, POLD3/p66/p68 and POLD4/p12, with POLD1 bearing DNA polymerase and 3' to 5' proofreading exonuclease activities. Within this complex, directly interacts with POLD1 and POLD2. Directly interacts with PCNA, as do POLD1 and POLD3; this interaction stimulates Pol-delta4 polymerase activity. As POLD1 and POLD2, directly interacts with WRNIP1; this interaction stimulates DNA polymerase delta-mediated DNA synthesis, independently of the presence of PCNA, possibly by increasing initiation frequency. Upon genotoxic stress induced by DNA damaging agents or by replication stress, POLD4 is proteolytically degraded and Pol-delta4 is converted into a trimeric form of the complex (Pol-delta3) that has an increased proofreading activity. The DNA polymerase delta complex interacts with POLDIP2; this interaction is probably mediated through direct binding to POLD2. Ubiquitinated; undergoes 'Lys-48'-linked ubiquitination in response to UV irradiation, leading to proteasomal degradation. This modification is partly mediated by RNF8 and by the DCX(DTL) E3 ubiquitin ligase complex (also called CRL4(CDT2)). Efficient degradation requires the presence of PCNA and is required for the inhibition of fork progression after DNA damage.

It is found in the nucleus. As a component of the tetrameric DNA polymerase delta 4 complex (Pol-delta4), plays a role in high fidelity genome replication and repair. Within this complex, increases the rate of DNA synthesis and decreases fidelity by regulating POLD1 polymerase and proofreading 3' to 5' exonuclease activity. Pol-delta4 participates in Okazaki fragment processing, through both the short flap pathway, as well as a nick translation system. Under conditions of DNA replication stress, required for the repair of broken replication forks through break-induced replication (BIR), a mechanism that may induce segmental genomic duplications of up to 200 kb. Involved in Pol-delta4 translesion synthesis (TLS) of templates carrying O6-methylguanine or abasic sites. Its degradation in response to DNA damage is required for the inhibition of fork progression and cell survival. This Bos taurus (Bovine) protein is DNA polymerase delta subunit 4 (POLD4).